Consider the following 218-residue polypeptide: Attacin-B (218 aa).

The first 17 residues, 1–17 (MQKTSILILALFAIAEA), serve as a signal peptide directing secretion. Positions 18-28 (VPTTGPIRVRR) are excised as a propeptide.

The protein belongs to the attacin/sarcotoxin-2 family. In terms of tissue distribution, hemolymph (at protein level).

The protein localises to the secreted. Functionally, hemolymph antibacterial protein. The chain is Attacin-B (AttB) from Drosophila melanogaster (Fruit fly).